We begin with the raw amino-acid sequence, 424 residues long: Tyrosine--tRNA ligase (424 aa).

An L-tyrosine-binding site is contributed by Y37. Residues 42–51 (PTADSLHLGH) carry the 'HIGH' region motif. L-tyrosine contacts are provided by Y174 and Q178. The 'KMSKS' region motif lies at 234–238 (KFGKT). K237 contacts ATP. Residues 357–414 (TGLIDALVASGLAKSKSEARTFIQSGSVAINGNKAEALDHAIGGDELLYGRFTILRRG) form the S4 RNA-binding domain.

The protein belongs to the class-I aminoacyl-tRNA synthetase family. TyrS type 1 subfamily. As to quaternary structure, homodimer.

Its subcellular location is the cytoplasm. The catalysed reaction is tRNA(Tyr) + L-tyrosine + ATP = L-tyrosyl-tRNA(Tyr) + AMP + diphosphate + H(+). Catalyzes the attachment of tyrosine to tRNA(Tyr) in a two-step reaction: tyrosine is first activated by ATP to form Tyr-AMP and then transferred to the acceptor end of tRNA(Tyr). The protein is Tyrosine--tRNA ligase of Dechloromonas aromatica (strain RCB).